A 1693-amino-acid polypeptide reads, in one-letter code: Serine protease filzig (1693 aa).

Residues 1-47 lie on the Cytoplasmic side of the membrane; the sequence is MFKWVTPASTATLSRCTLPATTAATTTTTAMAATRTATTTTRTTRPQ. The chain crosses the membrane as a helical; Signal-anchor for type II membrane protein span at residues 48 to 68; sequence LLSIALTSLIIIVASFVPTTS. Topologically, residues 69–1693 are extracellular; that stretch reads GFRSIETNGG…PWLRSITGVK (1625 aa). Disordered regions lie at residues 170–198, 212–321, 352–465, and 477–524; these read QQSA…QQPS, QQLD…NDDF, GLQD…THPG, and STGY…TTVS. 2 stretches are compositionally biased toward polar residues: residues 178-198 and 212-222; these read FESY…QQPS and QQLDSSSSISP. 2 stretches are compositionally biased toward low complexity: residues 230-241 and 252-268; these read EPQQQEYQSESE and TSSS…SSAS. Over residues 274 to 294 the composition is skewed to polar residues; the sequence is EPSQPADASNDQTTQKINKQP. 3 stretches are compositionally biased toward low complexity: residues 358–404, 422–431, and 488–501; these read SSES…PTQK, QQKPQQVAKP, and EPPK…PAEQ. The segment covering 502–524 has biased composition (polar residues); that stretch reads SYISSSTSAKRPTTGHNSPTTVS. N-linked (GlcNAc...) asparagine glycosylation is found at asparagine 541 and asparagine 582. Disordered stretches follow at residues 615–635, 752–1007, and 1057–1090; these read QDAS…PGYG, HYNP…PPAT, and YAHR…TVLI. Residues 771–799 show a composition bias toward polar residues; sequence SVSSHTTKVQEQMDETSNGYQQSETTSGY. Positions 836–847 are enriched in basic residues; that stretch reads PRPKPSTKRPAV. Composition is skewed to polar residues over residues 951 to 962 and 989 to 1000; these read QYDQPSAPSASY and KPISTSYVTGPS. 2 N-linked (GlcNAc...) asparagine glycosylation sites follow: asparagine 1215 and asparagine 1272. 3 stretches are compositionally biased toward low complexity: residues 1297–1307, 1331–1353, and 1362–1376; these read PVRTATTTRPK, TTTR…TTRR, and RVSS…SSAR. Residues 1297-1435 are disordered; that stretch reads PVRTATTTRP…TPNLAFHSPS (139 aa). The segment covering 1380 to 1391 has biased composition (acidic residues); that stretch reads DEIVDEEDEEDV. The Peptidase S1 domain occupies 1449 to 1691; that stretch reads IVGGKGSTFG…YKPWLRSITG (243 aa). The cysteines at positions 1480 and 1496 are disulfide-linked. Active-site charge relay system residues include histidine 1495 and aspartate 1544. Disulfide bonds link cysteine 1608/cysteine 1627 and cysteine 1638/cysteine 1667. Residue serine 1642 is the Charge relay system of the active site.

The protein belongs to the peptidase S1 family.

The protein resides in the cell membrane. Probable endopeptidase. In tracheal terminal cells, acts downstream of ich to regulate seamless tube growth and/or maintenance probably by processing lumenal matrix proteins. In Drosophila melanogaster (Fruit fly), this protein is Serine protease filzig.